Here is a 448-residue protein sequence, read N- to C-terminus: Beclin-1 (448 aa).

Met1 bears the N-acetylmethionine mark. Phosphoserine is present on residues Ser14 and Ser29. Phosphoserine; by AMPK occurs at positions 88, 91, and 94. The BH3 signature appears at 106 to 125; the sequence is TMENLSRRLKVTGDLFDIMS. The interval 110 to 157 is interaction with BCL2 and BCL2L1; that stretch reads LSRRLKVTGDLFDIMSGQTDVDHPLCEECTDTLLDQLDTQLNVTENEC. Phosphothreonine; by DAPK1 is present on Thr117. The stretch at 140–267 forms a coiled coil; it reads DTLLDQLDTQ…QLDKLKKTNV (128 aa). An evolutionary conserved domain (ECD) region spans residues 243–448; the sequence is DELKSVENQM…AWVSSQFYNK (206 aa). Glycyl lysine isopeptide (Lys-Gly) (interchain with G-Cter in ubiquitin) cross-links involve residues Lys400 and Lys435. The interval 423-448 is required for membrane-association; the sequence is WTKALKFMLTNLKWGLAWVSSQFYNK.

The protein belongs to the beclin family. As to quaternary structure, a homodimeric form is proposed to exist; this metastable form readily transits to ATG14- or UVRAG-containing complexes with BECN1:UVRAG being more stable than BECN1:ATG14. Component of the PI3K (PI3KC3/PI3K-III/class III phosphatidylinositol 3-kinase) complex the core of which is composed of the catalytic subunit PIK3C3, the regulatory subunit PIK3R4 and BECN1 associating with additional regulatory/auxiliary subunits to form alternative complex forms. Alternative complex forms containing a fourth regulatory subunit in a mutually exclusive manner are PI3K complex I (PI3KC3-C1) containing ATG14, and PI3K complex II (PI3KC3-C2) containing UVRAG. PI3KC3-C1 displays a V-shaped architecture with PIK3R4 serving as a bridge between PIK3C3 and the ATG14:BECN1 subcomplex. Both, PI3KC3-C1 and PI3KC3-C2, can associate with further regulatory subunits, such as RUBCN, SH3GLB1/Bif-1 and AMBRA1. PI3KC3-C1 probably associates with PIK3CB. Forms a complex with PPP2CA and AMBRA1; AMBRA1 and BECN1 components of the complex regulate MYC stability via different pathways. Component of the complex, at least composed of LRPPRC, BECN1 and BCL2; the interactions prevent BECN1 from forming an autophagy-inducing complex with PIK3C3. Interacts with AMBRA1, GOPC, GRID2. Interacts with BCL2 and BCL2L1 isoform Bcl-X(L); the interaction inhibits BECN1 function in promoting autophagy by interfering with the formation of the PI3K complex. Interacts with cytosolic HMGB1; inhibits the interaction of BECN1 and BCL2 leading to promotion of autophagy. Interacts with USP10, USP13, VMP1, DAPK1, RAB39A. Interacts with the poly-Gln domain of ATXN3; the interaction causes deubiquitination at Lys-400 and stabilizes BECN1. Interacts with SLAMF1. Interacts with TRIM5; the interaction causes activation of BECN1 by causing its dissociation from its inhibitors BCL2 and TAB2. Interacts with active ULK1 (phosphorylated on 'Ser-317') and MEFV simultaneously. Interacts with WDR81 and WDR91; negatively regulates the PI3 kinase/PI3K activity associated with endosomal membranes. Interacts with LAPTM4B; competes with EGFR for LAPTM4B binding; regulates EGFR activity. Interacts with TRIM50. Interacts with TRIM16. Interacts with ATG14; this interaction is increased in the absence of TMEM39A. Interacts with WASHC1; preventing interaction with AMBRA1 and the DCX(AMBRA1) complex and subsequent ubiquitination. Interacts with TRIM17. Interacts with BCL2L10/BCL-B (via BH1 domain). Interacts with SH3BGRL. Interacts with IRGM; enhancing BECN1-interacting partners and influencing the composition of the BECN1 complex. Interacts with ARMC3. Interacts with LRPPRC. In terms of assembly, (Microbial infection) Interacts with African swine fever virus (ASFV) apoptosis regulator Bcl-2 homolog; this interaction allows the virus to inhibit BECN1, and thus autophagy. In terms of processing, phosphorylation at Thr-117 by DAPK1 reduces its interaction with BCL2 and BCL2L1 and promotes induction of autophagy. In response to autophagic stimuli, phosphorylated at serine residues by AMPK in an ATG14-dependent manner, and this phosphorylation is critical for maximally efficient autophagy. Post-translationally, polyubiquitinated by NEDD4, both with 'Lys-11'- and 'Lys-63'-linkages. 'Lys-11'-linked polyubiquitination leads to degradation and is enhanced when the stabilizing interaction partner VPS34 is depleted. Deubiquitinated by USP10 and USP13, leading to stabilize the PIK3C3/VPS34-containing complexes. Polyubiquitinated at Lys-400 with 'Lys-48'-linkages. 'Lys-48'-linked polyubiquitination of Lys-400 leads to degradation. Deubiquitinated by ATXN3, leading to stabilization. Ubiquitinated at Lys-435 via 'Lys-63'-linkage by the DCX(AMBRA1) complex, thereby increasing the association between BECN1 and PIK3C3 to promote PIK3C3 activity. 'Lys-48'-linked ubiquitination by RNF216 leads to proteasomal degradation and autophagy inhibition. Proteolytically processed by caspases including CASP8 and CASP3; the C-terminal fragments lack autophagy-inducing capacity and are proposed to induce apoptosis. Thus the cleavage is proposed to be an determinant to switch from autophagy to apoptosis pathways affecting cellular homeostasis including viral infections and survival of tumor cells.

It is found in the cytoplasm. The protein resides in the golgi apparatus. The protein localises to the trans-Golgi network membrane. Its subcellular location is the endosome membrane. It localises to the endoplasmic reticulum membrane. It is found in the mitochondrion membrane. The protein resides in the cytoplasmic vesicle. The protein localises to the autophagosome. Its subcellular location is the mitochondrion. It localises to the nucleus. Functionally, plays a central role in autophagy. Acts as a core subunit of the PI3K complex that mediates formation of phosphatidylinositol 3-phosphate; different complex forms are believed to play a role in multiple membrane trafficking pathways: PI3KC3-C1 is involved in initiation of autophagosomes and PI3KC3-C2 in maturation of autophagosomes and endocytosis. Involved in regulation of degradative endocytic trafficking and required for the abscission step in cytokinesis, probably in the context of PI3KC3-C2. Essential for the formation of PI3KC3-C2 but not PI3KC3-C1 PI3K complex forms. Involved in endocytosis. May play a role in antiviral host defense. Beclin-1-C 35 kDa localized to mitochondria can promote apoptosis; it induces the mitochondrial translocation of BAX and the release of proapoptotic factors. This chain is Beclin-1 (BECN1), found in Sus scrofa (Pig).